The sequence spans 262 residues: Ornithine carbamoyltransferase (262 aa).

Residues 3–7 (STRTR), Gln-30, Arg-54, and 81–84 (HPTQ) each bind carbamoyl phosphate. L-ornithine contacts are provided by residues Asn-114, Asp-178, and 182-183 (SM). Residues 219 to 222 (HCLP) and Thr-247 each bind carbamoyl phosphate.

It belongs to the aspartate/ornithine carbamoyltransferase superfamily. OTCase family.

The protein resides in the cytoplasm. It catalyses the reaction carbamoyl phosphate + L-ornithine = L-citrulline + phosphate + H(+). It functions in the pathway amino-acid biosynthesis; L-arginine biosynthesis; L-arginine from L-ornithine and carbamoyl phosphate: step 1/3. The protein operates within amino-acid degradation; L-arginine degradation via ADI pathway; carbamoyl phosphate from L-arginine: step 2/2. Its function is as follows. Reversibly catalyzes the transfer of the carbamoyl group from carbamoyl phosphate (CP) to the N(epsilon) atom of ornithine (ORN) to produce L-citrulline. The protein is Ornithine carbamoyltransferase (argF) of Neisseria meningitidis.